Here is a 282-residue protein sequence, read N- to C-terminus: Epoxide hydrolase LasB (282 aa).

Residues 1–133 (MPAETVRKEV…TDSSWTARPA (133 aa)) are lsd19A. Y14 serves as a coordination point for substrate. D38 functions as the Proton acceptor; for 5-exo epoxide-opening cyclization activity in the catalytic mechanism. E65 and H146 together coordinate substrate. Residues 134-282 (PDEERRKELA…TDVSLLDPAA (149 aa)) form a lsd19B region. The active-site Proton acceptor; for 6-endo epoxide-opening cyclization activity is D170. Positions 177, 197, and 251 each coordinate substrate.

In terms of biological role, epoxide hydrolase responsible for the double epoxide-opening cyclization of bisepoxyprelasalocid A to form lasalocid A, a polyether antibiotic. In vitro, accepts various substrate analogs differing in the left segment of lasalocid and epoxide stereochemistry to afford products with excellent regioselectivity. This is Epoxide hydrolase LasB (lsd19) from Streptomyces lasalocidi (Streptomyces lasaliensis).